Reading from the N-terminus, the 71-residue chain is Small ribosomal subunit protein eS17 (71 aa).

This sequence belongs to the eukaryotic ribosomal protein eS17 family.

In Pyrobaculum aerophilum (strain ATCC 51768 / DSM 7523 / JCM 9630 / CIP 104966 / NBRC 100827 / IM2), this protein is Small ribosomal subunit protein eS17.